The following is a 310-amino-acid chain: Ornithine carbamoyltransferase (310 aa).

Residues 56–59 (STRT), Gln83, Arg107, and 134–137 (HPCQ) contribute to the carbamoyl phosphate site. L-ornithine is bound by residues Asn165, Asp229, and 233–234 (SM). Carbamoyl phosphate-binding positions include 269–270 (CL) and Arg297.

This sequence belongs to the aspartate/ornithine carbamoyltransferase superfamily. OTCase family.

It localises to the cytoplasm. The catalysed reaction is carbamoyl phosphate + L-ornithine = L-citrulline + phosphate + H(+). The protein operates within amino-acid biosynthesis; L-arginine biosynthesis; L-arginine from L-ornithine and carbamoyl phosphate: step 1/3. Reversibly catalyzes the transfer of the carbamoyl group from carbamoyl phosphate (CP) to the N(epsilon) atom of ornithine (ORN) to produce L-citrulline. This chain is Ornithine carbamoyltransferase, found in Symbiobacterium thermophilum (strain DSM 24528 / JCM 14929 / IAM 14863 / T).